The chain runs to 290 residues: Putative neuropeptide Y receptor type 6 (290 aa).

Residues 1–39 (MEVSLNHPASNTTSTKNNNSAFFYFESCQPPSPALLLLC) are Extracellular-facing. The N-linked (GlcNAc...) asparagine glycan is linked to N11. Residues 40 to 60 (IAYTVVLIVGLFGNLSLIIII) form a helical membrane-spanning segment. Residues 61–83 (FKKQRKAQNFTSILIANLSLSDT) lie on the Cytoplasmic side of the membrane. A helical membrane pass occupies residues 84–104 (LVCVMCIHFTIIYTLMDHWIF). The Extracellular portion of the chain corresponds to 105-111 (GDTMCRL). An intrachain disulfide couples C109 to C196. The helical transmembrane segment at 112–132 (TSYVQSVSISVSIFSLVFTAV) threads the bilayer. Topologically, residues 133 to 150 (ERYQLIVNPRGWKPSVTH) are cytoplasmic. A helical transmembrane segment spans residues 151–171 (AYWGITLIWLFSLLLSIPFFL). Residues 172–206 (SYHLTDEPFRNLSLPTDLYTHQVACVENWPSKKDR) lie on the Extracellular side of the membrane. The chain crosses the membrane as a helical span at residues 207-227 (LLFTTSLFLLQYFVPLGFILI). The Cytoplasmic portion of the chain corresponds to 228-258 (CYLKIVICLRRRNAKVDKKKENEGRLNENKR). The helical transmembrane segment at 259–279 (INTMLISIVVTFGACWLPRIS) threads the bilayer. At 280-290 (SMSSLTGIMRC) the chain is on the extracellular side.

Belongs to the G-protein coupled receptor 1 family. In terms of tissue distribution, expressed in heart, skeletal muscle, gastrointestinal tissues, spleen, brain and adrenal glands.

It localises to the membrane. In terms of biological role, when expressed, is unable to bind pancreatic polypeptide (PP), neuropeptide Y (NPY), or peptide YY (PYY), suggesting that either it is functionally inactive or that it may have acquired a pancreatic polypeptide-independent function. In Homo sapiens (Human), this protein is Putative neuropeptide Y receptor type 6 (NPY6R).